Consider the following 562-residue polypeptide: Putative transport protein YE1478 (562 aa).

6 consecutive transmembrane segments (helical) span residues 8 to 28, 32 to 52, 66 to 86, 94 to 114, 118 to 138, and 158 to 178; these read LLNG…LCLG, LGPI…LLGQ, FMLF…SIFF, MLAL…GKLF, IGLT…LVGA, and NLSL…ILGA. RCK C-terminal domains are found at residues 202–288 and 290–373; these read LDTD…SFRN and KEVF…KIGF. 5 helical membrane-spanning segments follow: residues 383–403, 406–426, 447–467, 475–495, and 541–561; these read LLAF…TFQF, FSFG…LGFL, FGLM…INSS, MLIS…IFGA, and IANV…PGIL.

Belongs to the AAE transporter (TC 2.A.81) family. YbjL subfamily.

It localises to the cell membrane. The protein is Putative transport protein YE1478 of Yersinia enterocolitica serotype O:8 / biotype 1B (strain NCTC 13174 / 8081).